The following is a 443-amino-acid chain: F-box only protein 39 (443 aa).

The 47-residue stretch at Gln-13 to Arg-59 folds into the F-box domain.

In terms of assembly, directly interacts with SKP1 and CUL1.

In terms of biological role, substrate-recognition component of the SCF (SKP1-CUL1-F-box protein)-type E3 ubiquitin ligase complex. This is F-box only protein 39 (Fbxo39) from Rattus norvegicus (Rat).